The following is a 445-amino-acid chain: Tol-Pal system protein TolB (445 aa).

Residues 1 to 26 form the signal peptide; the sequence is MLNRRNFIRTTSALAASTALPGYAFG.

This sequence belongs to the TolB family. In terms of assembly, the Tol-Pal system is composed of five core proteins: the inner membrane proteins TolA, TolQ and TolR, the periplasmic protein TolB and the outer membrane protein Pal. They form a network linking the inner and outer membranes and the peptidoglycan layer.

It is found in the periplasm. Its function is as follows. Part of the Tol-Pal system, which plays a role in outer membrane invagination during cell division and is important for maintaining outer membrane integrity. This is Tol-Pal system protein TolB from Jannaschia sp. (strain CCS1).